We begin with the raw amino-acid sequence, 187 residues long: Potassium-transporting ATPase KdpC subunit (187 aa).

A helical membrane pass occupies residues 11–31; that stretch reads LILLMTVVTGALYPLAVTGIA.

It belongs to the KdpC family. In terms of assembly, the system is composed of three essential subunits: KdpA, KdpB and KdpC.

The protein resides in the cell inner membrane. Functionally, part of the high-affinity ATP-driven potassium transport (or Kdp) system, which catalyzes the hydrolysis of ATP coupled with the electrogenic transport of potassium into the cytoplasm. This subunit acts as a catalytic chaperone that increases the ATP-binding affinity of the ATP-hydrolyzing subunit KdpB by the formation of a transient KdpB/KdpC/ATP ternary complex. This is Potassium-transporting ATPase KdpC subunit from Pseudomonas entomophila (strain L48).